The sequence spans 126 residues: UPF0102 protein TP_0913 (126 aa).

This sequence belongs to the UPF0102 family.

The chain is UPF0102 protein TP_0913 from Treponema pallidum (strain Nichols).